A 253-amino-acid polypeptide reads, in one-letter code: Tetraspanin-11 (253 aa).

3 helical membrane passes run 19-39 (LLFV…AVGI), 63-83 (ILIF…GAIL), and 93-113 (YFCL…LAHV). Asn127 carries an N-linked (GlcNAc...) asparagine glycan. Residues 220–240 (LLLMGAVGIGVACLQICGMVL) form a helical membrane-spanning segment.

Belongs to the tetraspanin (TM4SF) family.

It localises to the membrane. This chain is Tetraspanin-11 (TSPAN11), found in Homo sapiens (Human).